The following is a 695-amino-acid chain: WD repeat-containing protein 93 (695 aa).

Residues 1–35 are disordered; the sequence is MSSFKGNQAQKRRLSVFPKGPLEIPSPTEADWPKD. A WD repeat occupies 421–460; it reads PCAAPIVMSQISSFSSYLALVCEDGVLILWDLAEGFLFGV.

As to expression, testis-specific. Expressed in spermatogonia, spermatocytes and spermatids.

The protein is WD repeat-containing protein 93 (Wdr93) of Mus musculus (Mouse).